A 645-amino-acid polypeptide reads, in one-letter code: L-aspartate oxidase, chloroplastic (645 aa).

Residues 1–70 (MAALMNGFGS…RMRHKVGSIR (70 aa)) constitute a chloroplast transit peptide. Residues 92–95 (SGVA), Lys114, 121–128 (NTNYAQGG), and Asp292 contribute to the FAD site. The active-site Proton donor/acceptor is Arg368. FAD-binding positions include Glu453 and 469-470 (SL).

Belongs to the FAD-dependent oxidoreductase 2 family. NadB subfamily. The cofactor is FAD.

It is found in the plastid. The protein resides in the chloroplast. The enzyme catalyses L-aspartate + O2 = iminosuccinate + H2O2. It participates in cofactor biosynthesis; NAD(+) biosynthesis; iminoaspartate from L-aspartate (oxidase route): step 1/1. Catalyzes the oxidation of L-aspartate to iminoaspartate. The protein is L-aspartate oxidase, chloroplastic of Oryza sativa subsp. japonica (Rice).